The primary structure comprises 293 residues: Ribosomal protein L11 methyltransferase (293 aa).

S-adenosyl-L-methionine contacts are provided by Thr-145, Gly-166, Asp-188, and Asn-230.

Belongs to the methyltransferase superfamily. PrmA family.

It is found in the cytoplasm. It catalyses the reaction L-lysyl-[protein] + 3 S-adenosyl-L-methionine = N(6),N(6),N(6)-trimethyl-L-lysyl-[protein] + 3 S-adenosyl-L-homocysteine + 3 H(+). Functionally, methylates ribosomal protein L11. This chain is Ribosomal protein L11 methyltransferase, found in Shewanella baltica (strain OS195).